The sequence spans 160 residues: Phosphopantetheine adenylyltransferase (160 aa).

A substrate-binding site is contributed by threonine 10. Residues 10 to 11 (TF) and histidine 18 contribute to the ATP site. The substrate site is built by lysine 42, methionine 74, and arginine 88. ATP is bound by residues 89–91 (GLR), glutamate 99, and 124–130 (LSFLSSS).

It belongs to the bacterial CoaD family. As to quaternary structure, homohexamer. Mg(2+) serves as cofactor.

It localises to the cytoplasm. The enzyme catalyses (R)-4'-phosphopantetheine + ATP + H(+) = 3'-dephospho-CoA + diphosphate. The protein operates within cofactor biosynthesis; coenzyme A biosynthesis; CoA from (R)-pantothenate: step 4/5. Functionally, reversibly transfers an adenylyl group from ATP to 4'-phosphopantetheine, yielding dephospho-CoA (dPCoA) and pyrophosphate. The protein is Phosphopantetheine adenylyltransferase of Photorhabdus laumondii subsp. laumondii (strain DSM 15139 / CIP 105565 / TT01) (Photorhabdus luminescens subsp. laumondii).